Reading from the N-terminus, the 461-residue chain is Probable tubulin polyglutamylase TTLL9 (461 aa).

A compositionally biased stretch (polar residues) spans 1 to 10 (MSRQKSQTSK). The segment at 1 to 20 (MSRQKSQTSKGHGASKGKER) is disordered. Residues 22–402 (QRTLIRFKTT…EARLTGKEKR (381 aa)) enclose the TTL domain. ATP is bound by residues Lys-149 and 155-156 (QG). Residue Gln-155 participates in a protein binding. The segment covering 186-197 (QATRANVNPSGS) has biased composition (polar residues). Residues 186–208 (QATRANVNPSGSHDTRSSDDQKD) form a disordered region. Over residues 198–208 (HDTRSSDDQKD) the composition is skewed to basic and acidic residues. ATP is bound by residues 218-221 (QRYV) and 231-233 (KFD). Residue Arg-257 coordinates L-glutamate. ATP is bound at residue 276–277 (TN). Position 294 (Lys-294) interacts with L-glutamate. Mg(2+) is bound by residues Asp-348, Glu-361, and Asn-363. Lys-379 lines the L-glutamate pocket.

Belongs to the tubulin--tyrosine ligase family. Mg(2+) serves as cofactor.

The protein resides in the cytoplasm. Its subcellular location is the cytoskeleton. The protein localises to the cilium basal body. It is found in the flagellum axoneme. The catalysed reaction is (L-glutamyl)(n)-gamma-L-glutamyl-L-glutamyl-[protein] + L-glutamate + ATP = (L-glutamyl)(n+1)-gamma-L-glutamyl-L-glutamyl-[protein] + ADP + phosphate + H(+). Probable tubulin polyglutamylase that generates side chains of glutamate on the gamma-carboxyl group of specific glutamate residues within the C-terminal tail of target proteins. Similar to TTLL1, may acquire enzymatic activity only in complex with other proteins as it is most likely lacking domains important for autonomous activity. Mediates tubulin polyglutamylation which induces establishment of microtubule heterogeneity in sperm flagella, thereby playing a role in normal motile flagella axoneme structure and sperm flagella beating pattern. The protein is Probable tubulin polyglutamylase TTLL9 (Ttll9) of Rattus norvegicus (Rat).